Reading from the N-terminus, the 298-residue chain is Protease HtpX homolog (298 aa).

Helical transmembrane passes span 15 to 35 (LIMV…GYLF) and 39 to 59 (PWMG…IMWQ). Zn(2+) is bound at residue His-143. Residue Glu-144 is part of the active site. His-147 lines the Zn(2+) pocket. 2 helical membrane passes run 153 to 173 (ILLS…SGMA) and 197 to 217 (MIFK…SASL). A Zn(2+)-binding site is contributed by Glu-227.

It belongs to the peptidase M48B family. It depends on Zn(2+) as a cofactor.

The protein resides in the cell membrane. In Lactobacillus helveticus (strain DPC 4571), this protein is Protease HtpX homolog.